A 377-amino-acid polypeptide reads, in one-letter code: Cytochrome c peroxidase, mitochondrial (377 aa).

A mitochondrion-targeting transit peptide spans 1 to 32 (MSFRAPNLIRSTVGRRAGQTLNLRSQVIRRRF). His-138 acts as the Proton acceptor in catalysis. Residue His-261 coordinates heme b. The active-site Tryptophan radical intermediate is the Trp-277.

The protein belongs to the peroxidase family. Cytochrome c peroxidase subfamily. Forms a one-to-one complex with cytochrome c. Interacts with MID1 (via C-terminus); the interaction may contribute to cellular detoxification of radicals. The cofactor is heme b.

Its subcellular location is the mitochondrion matrix. The protein localises to the mitochondrion intermembrane space. It carries out the reaction 2 Fe(II)-[cytochrome c] + H2O2 + 2 H(+) = 2 Fe(III)-[cytochrome c] + 2 H2O. Its function is as follows. Destroys radicals which are normally produced within the cells and which are toxic to biological systems. This Cryptococcus neoformans var. grubii serotype A (strain H99 / ATCC 208821 / CBS 10515 / FGSC 9487) (Filobasidiella neoformans var. grubii) protein is Cytochrome c peroxidase, mitochondrial (CCP1).